The chain runs to 299 residues: UDP-N-acetylenolpyruvoylglucosamine reductase (299 aa).

Residues 29–193 enclose the FAD-binding PCMH-type domain; it reads RIGGPAEIFL…TAASLRFRKA (165 aa). Residue R173 is part of the active site. The active-site Proton donor is S222. The active site involves E292.

This sequence belongs to the MurB family. FAD is required as a cofactor.

The protein localises to the cytoplasm. It catalyses the reaction UDP-N-acetyl-alpha-D-muramate + NADP(+) = UDP-N-acetyl-3-O-(1-carboxyvinyl)-alpha-D-glucosamine + NADPH + H(+). It participates in cell wall biogenesis; peptidoglycan biosynthesis. In terms of biological role, cell wall formation. This Syntrophotalea carbinolica (strain DSM 2380 / NBRC 103641 / GraBd1) (Pelobacter carbinolicus) protein is UDP-N-acetylenolpyruvoylglucosamine reductase.